The following is a 273-amino-acid chain: Putative carboxypeptidase YodJ (273 aa).

Residues 1-23 (MKKSGKWFSLAAALSVTAIVGAG) form the signal peptide. Cys24 is lipidated: N-palmitoyl cysteine. Cys24 carries the S-diacylglycerol cysteine lipid modification. A disordered region spans residues 27–58 (SNGDAQKDTKTTAETKQTEQKTADSKKSNTQN). The span at 31–53 (AQKDTKTTAETKQTEQKTADSKK) shows a compositional bias: basic and acidic residues.

It belongs to the peptidase M15B family.

The protein localises to the cell membrane. This Bacillus subtilis (strain 168) protein is Putative carboxypeptidase YodJ (yodJ).